The sequence spans 1106 residues: Inversin (1106 aa).

ANK repeat units follow at residues serine 13–aspartate 42, phenylalanine 47–arginine 76, serine 80–lysine 110, glutamate 113–threonine 144, asparagine 148–isoleucine 177, glutamate 181–leucine 213, glutamate 220–serine 250, leucine 254–serine 285, glutamine 288–aspartate 317, glutamate 321–isoleucine 350, tyrosine 356–alanine 385, methionine 389–leucine 418, aspartate 422–valine 451, alanine 455–isoleucine 484, glutamate 488–histidine 517, and glutamate 523–alanine 553. The D-box 1 signature appears at arginine 490 to asparagine 498. The IQ 1 domain occupies glutamine 555–lysine 584. Positions arginine 589–serine 607 are enriched in basic and acidic residues. Disordered regions lie at residues arginine 589–methionine 615, leucine 636–serine 688, alanine 746–glycine 782, and alanine 809–alanine 833. Polar residues-rich tracts occupy residues leucine 636–leucine 645 and valine 653–glycine 666. Basic residues predominate over residues lysine 812 to histidine 822. The D-box 2 motif lies at arginine 944 to asparagine 952. Residues lysine 951 to glutamine 980 enclose the IQ 2 domain.

In terms of assembly, binds calmodulin via its IQ domains. Interacts with APC2.

Its subcellular location is the cytoplasm. The protein localises to the cytoskeleton. Its function is as follows. Required for normal renal development and establishment of left-right axis. Probably acts as a molecular switch between different Wnt signaling pathways. Inhibits the canonical Wnt pathway by targeting cytoplasmic disheveled for degradation by the ubiquitin-proteasome. This suggests that it is required in renal development to oppose the repression of terminal differentiation of tubular epithelial cells by Wnt signaling. The chain is Inversin (INVS) from Gallus gallus (Chicken).